A 118-amino-acid chain; its full sequence is Small ribosomal subunit protein eS24 (118 aa).

This sequence belongs to the eukaryotic ribosomal protein eS24 family.

The chain is Small ribosomal subunit protein eS24 from Sulfolobus acidocaldarius (strain ATCC 33909 / DSM 639 / JCM 8929 / NBRC 15157 / NCIMB 11770).